The chain runs to 130 residues: DNA-directed RNA polymerase subunit omega (130 aa).

Disordered stretches follow at residues 79–98 (EPEP…VDAD) and 109–130 (EEEL…EEDE).

The protein belongs to the RNA polymerase subunit omega family. In terms of assembly, the RNAP catalytic core consists of 2 alpha, 1 beta, 1 beta' and 1 omega subunit. When a sigma factor is associated with the core the holoenzyme is formed, which can initiate transcription.

The catalysed reaction is RNA(n) + a ribonucleoside 5'-triphosphate = RNA(n+1) + diphosphate. Its function is as follows. Promotes RNA polymerase assembly. Latches the N- and C-terminal regions of the beta' subunit thereby facilitating its interaction with the beta and alpha subunits. The sequence is that of DNA-directed RNA polymerase subunit omega (rpoZ) from Bradyrhizobium diazoefficiens (strain JCM 10833 / BCRC 13528 / IAM 13628 / NBRC 14792 / USDA 110).